The chain runs to 157 residues: 2-C-methyl-D-erythritol 2,4-cyclodiphosphate synthase (157 aa).

A divalent metal cation-binding residues include D8 and H10. 4-CDP-2-C-methyl-D-erythritol 2-phosphate contacts are provided by residues 8–10 and 34–35; these read DVH and HS. Residue H42 coordinates a divalent metal cation. Residues 56 to 58, 132 to 135, and R142 each bind 4-CDP-2-C-methyl-D-erythritol 2-phosphate; these read DIG and TTNE.

The protein belongs to the IspF family. Homotrimer. It depends on a divalent metal cation as a cofactor.

The enzyme catalyses 4-CDP-2-C-methyl-D-erythritol 2-phosphate = 2-C-methyl-D-erythritol 2,4-cyclic diphosphate + CMP. It participates in isoprenoid biosynthesis; isopentenyl diphosphate biosynthesis via DXP pathway; isopentenyl diphosphate from 1-deoxy-D-xylulose 5-phosphate: step 4/6. Its function is as follows. Involved in the biosynthesis of isopentenyl diphosphate (IPP) and dimethylallyl diphosphate (DMAPP), two major building blocks of isoprenoid compounds. Catalyzes the conversion of 4-diphosphocytidyl-2-C-methyl-D-erythritol 2-phosphate (CDP-ME2P) to 2-C-methyl-D-erythritol 2,4-cyclodiphosphate (ME-CPP) with a corresponding release of cytidine 5-monophosphate (CMP). The protein is 2-C-methyl-D-erythritol 2,4-cyclodiphosphate synthase of Chlorobium luteolum (strain DSM 273 / BCRC 81028 / 2530) (Pelodictyon luteolum).